A 2183-amino-acid chain; its full sequence is Genome polyprotein (2183 aa).

Gly2 is lipidated: N-myristoyl glycine; by host. The Cytoplasmic segment spans residues 2-1493 (GAQVSTQKTG…HVSRAFICLQ (1492 aa)). The segment at 566–582 (FYQGPTEESVERAMGRV) is amphipathic alpha-helix. Catalysis depends on for protease 2A activity residues His870 and Asp888. Zn(2+) is bound by residues Cys905 and Cys907. Cys959 (for protease 2A activity) is an active-site residue. Residues Cys965 and His967 each contribute to the Zn(2+) site. The interval 1099–1171 (NNNWLKKFTE…EQSAPSQSDQ (73 aa)) is membrane-binding. Residues 1099–1237 (NNNWLKKFTE…SPGAGKSVAT (139 aa)) are oligomerization. The tract at residues 1120-1124 (AVKIQ) is RNA-binding. The SF3 helicase domain occupies 1203 to 1359 (EKKMSNYIQF…SMYSQNGKIN (157 aa)). 3 residues coordinate Zn(2+): Cys1367, Cys1379, and Cys1384. The segment at 1367 to 1384 (CDEECCPVNFKKCCPLVC) adopts a C4-type; degenerate zinc-finger fold. The interval 1411–1418 (EYNHRHSV) is RNA-binding. Residues 1422 to 1427 (LEALFQ) form an oligomerization region. The stretch at 1494–1509 (ALTTFVSVAGIIYIIY) is an intramembrane region. Residues 1510-2183 (KLFAGFQGAY…TLRRKWLDAF (674 aa)) are Cytoplasmic-facing. Tyr1519 carries the O-(5'-phospho-RNA)-tyrosine modification. One can recognise a Peptidase C3 domain in the interval 1539–1717 (GPAFEFAVAM…FSASLLRHYF (179 aa)). Catalysis depends on for protease 3C activity residues His1578, Glu1609, and Cys1685. The RdRp catalytic domain maps to 1948–2064 (GHLRAFDYSG…SYPLPIDASL (117 aa)). Residues Asp1954 and Asp2050 each contribute to the Mg(2+) site.

It belongs to the picornaviruses polyprotein family. Interacts with capsid protein VP1 and capsid protein VP3 to form heterotrimeric protomers. As to quaternary structure, interacts with capsid protein VP0, and capsid protein VP3 to form heterotrimeric protomers. Five protomers subsequently associate to form pentamers which serve as building blocks for the capsid. Interacts with capsid protein VP2, capsid protein VP3 and capsid protein VP4 following cleavage of capsid protein VP0. Interacts with host CXADR. In terms of assembly, interacts with capsid protein VP1 and capsid protein VP3 in the mature capsid. Interacts with capsid protein VP0 and capsid protein VP1 to form heterotrimeric protomers. Five protomers subsequently associate to form pentamers which serve as building blocks for the capsid. Interacts with capsid protein VP4 in the mature capsid. Interacts with protein 2C; this interaction may be important for virion morphogenesis. As to quaternary structure, interacts with capsid protein VP1 and capsid protein VP3. In terms of assembly, homodimer. Homohexamer; forms a hexameric ring structure with 6-fold symmetry characteristic of AAA+ ATPases. Interacts (via N-terminus) with host RTN3 (via reticulon domain); this interaction is important for viral replication. Interacts with capsid protein VP3; this interaction may be important for virion morphogenesis. As to quaternary structure, interacts with protein 3CD. In terms of assembly, homodimer. Interacts with host GBF1. Interacts (via GOLD domain) with host ACBD3 (via GOLD domain); this interaction allows the formation of a viral protein 3A/ACBD3 heterotetramer with a 2:2 stoichiometry, which will stimulate the recruitment of host PI4KB in order to synthesize PI4P at the viral RNA replication sites. Interacts with RNA-directed RNA polymerase. As to quaternary structure, interacts with protein 3AB and with RNA-directed RNA polymerase. In terms of assembly, interacts with Viral protein genome-linked and with protein 3CD. The cofactor is Mg(2+). In terms of processing, specific enzymatic cleavages in vivo by the viral proteases yield processing intermediates and the mature proteins. Post-translationally, myristoylation is required for the formation of pentamers during virus assembly. Further assembly of 12 pentamers and a molecule of genomic RNA generates the provirion. During virion maturation, immature virions are rendered infectious following cleavage of VP0 into VP4 and VP2. This maturation seems to be an autocatalytic event triggered by the presence of RNA in the capsid and it is followed by a conformational change infectious virion. In terms of processing, myristoylation is required during RNA encapsidation and formation of the mature virus particle. Post-translationally, VPg is uridylylated by the polymerase into VPg-pUpU. This acts as a nucleotide-peptide primer for the genomic RNA replication.

It localises to the virion. It is found in the host cytoplasm. Its subcellular location is the host cytoplasmic vesicle membrane. The protein localises to the host nucleus. The catalysed reaction is a ribonucleoside 5'-triphosphate + H2O = a ribonucleoside 5'-diphosphate + phosphate + H(+). It catalyses the reaction Selective cleavage of Tyr-|-Gly bond in the picornavirus polyprotein.. It carries out the reaction RNA(n) + a ribonucleoside 5'-triphosphate = RNA(n+1) + diphosphate. The enzyme catalyses Selective cleavage of Gln-|-Gly bond in the poliovirus polyprotein. In other picornavirus reactions Glu may be substituted for Gln, and Ser or Thr for Gly.. Replication or transcription is subject to high level of random mutations by the nucleotide analog ribavirin. Forms an icosahedral capsid of pseudo T=3 symmetry with capsid proteins VP2 and VP3. The capsid is 300 Angstroms in diameter, composed of 60 copies of each capsid protein and enclosing the viral positive strand RNA genome. Capsid protein VP1 mainly forms the vertices of the capsid. Capsid protein VP1 interacts with host CXADR to provide virion attachment to target host cells. This attachment induces virion internalization. Tyrosine kinases are probably involved in the entry process. After binding to its receptor, the capsid undergoes conformational changes. Capsid protein VP1 N-terminus (that contains an amphipathic alpha-helix) and capsid protein VP4 are externalized. Together, they shape a pore in the host membrane through which viral genome is translocated to host cell cytoplasm. Functionally, forms an icosahedral capsid of pseudo T=3 symmetry with capsid proteins VP2 and VP3. The capsid is 300 Angstroms in diameter, composed of 60 copies of each capsid protein and enclosing the viral positive strand RNA genome. Its function is as follows. Lies on the inner surface of the capsid shell. After binding to the host receptor, the capsid undergoes conformational changes. Capsid protein VP4 is released, Capsid protein VP1 N-terminus is externalized, and together, they shape a pore in the host membrane through which the viral genome is translocated into the host cell cytoplasm. In terms of biological role, component of immature procapsids, which is cleaved into capsid proteins VP4 and VP2 after maturation. Allows the capsid to remain inactive before the maturation step. Cysteine protease that cleaves viral polyprotein and specific host proteins. It is responsible for the autocatalytic cleavage between the P1 and P2 regions, which is the first cleavage occurring in the polyprotein. Also cleaves the host translation initiation factor EIF4G1, in order to shut down the capped cellular mRNA translation. Inhibits the host nucleus-cytoplasm protein and RNA trafficking by cleaving host members of the nuclear pores. Counteracts stress granule formation probably by antagonizing its assembly or promoting its dissassembly. Cleaves and inhibits host IFIH1/MDA5, thereby inhibiting the type-I IFN production and the establishment of the antiviral state. Cleaves and inhibits host MAVS, thereby inhibiting the type-I IFN production and the establishment of the antiviral state. Functionally, plays an essential role in the virus replication cycle by acting as a viroporin. Creates a pore in the host endoplasmic reticulum and as a consequence releases Ca2+ in the cytoplasm of infected cell. In turn, high levels of cytoplasmic calcium may trigger membrane trafficking and transport of viral ER-associated proteins to viroplasms, sites of viral genome replication. Its function is as follows. Induces and associates with structural rearrangements of intracellular membranes. Displays RNA-binding, nucleotide binding and NTPase activities. May play a role in virion morphogenesis and viral RNA encapsidation by interacting with the capsid protein VP3. In terms of biological role, localizes the viral replication complex to the surface of membranous vesicles. Together with protein 3CD binds the Cis-Active RNA Element (CRE) which is involved in RNA synthesis initiation. Acts as a cofactor to stimulate the activity of 3D polymerase, maybe through a nucleid acid chaperone activity. Localizes the viral replication complex to the surface of membranous vesicles. It inhibits host cell endoplasmic reticulum-to-Golgi apparatus transport and causes the disassembly of the Golgi complex, possibly through GBF1 interaction. This would result in depletion of MHC, trail receptors and IFN receptors at the host cell surface. Plays an essential role in viral RNA replication by recruiting ACBD3 and PI4KB at the viral replication sites, thereby allowing the formation of the rearranged membranous structures where viral replication takes place. Functionally, acts as a primer for viral RNA replication and remains covalently bound to viral genomic RNA. VPg is uridylylated prior to priming replication into VPg-pUpU. The oriI viral genomic sequence may act as a template for this. The VPg-pUpU is then used as primer on the genomic RNA poly(A) by the RNA-dependent RNA polymerase to replicate the viral genome. During genome replication, the VPg-RNA linkage is removed by the host TDP2, thereby accelerating replication. During the late stage of the replication cycle, host TDP2 is excluded from sites of viral RNA synthesis and encapsidation, allowing for the generation of progeny virions. Its function is as follows. Involved in the viral replication complex and viral polypeptide maturation. It exhibits protease activity with a specificity and catalytic efficiency that is different from protease 3C. Protein 3CD lacks polymerase activity. Protein 3CD binds to the 5'UTR of the viral genome. In terms of biological role, replicates the viral genomic RNA on the surface of intracellular membranes. May form linear arrays of subunits that propagate along a strong head-to-tail interaction called interface-I. Covalently attaches UMP to a tyrosine of VPg, which is used to prime RNA synthesis. The positive stranded RNA genome is first replicated at virus induced membranous vesicles, creating a dsRNA genomic replication form. This dsRNA is then used as template to synthesize positive stranded RNA genomes. ss(+)RNA genomes are either translated, replicated or encapsidated. Major viral protease that mediates proteolytic processing of the polyprotein. Cleaves host EIF5B, contributing to host translation shutoff. Also cleaves host PABPC1, contributing to host translation shutoff. Cleaves host NLRP1, triggers host N-glycine-mediated degradation of the autoinhibitory NLRP1 N-terminal fragment. This chain is Genome polyprotein, found in Coxsackievirus B4 (strain E2).